The sequence spans 50 residues: Sperm protamine P1 (50 aa).

Cystine bridges form between Cys7–Cys15 and Cys38–Cys46.

The protein belongs to the protamine P1 family. Cross-linked by interchain disulfide bonds around the DNA-helix. As to expression, testis.

It localises to the nucleus. Its subcellular location is the chromosome. Its function is as follows. Protamines substitute for histones in the chromatin of sperm during the haploid phase of spermatogenesis. They compact sperm DNA into a highly condensed, stable and inactive complex. This chain is Sperm protamine P1 (PRM1), found in Equus caballus (Horse).